Here is a 141-residue protein sequence, read N- to C-terminus: Cystatin-S (141 aa).

The first 27 residues, Met-1 to Leu-27, serve as a signal peptide directing secretion. Residues Gln-76–Gly-80 carry the Secondary area of contact motif. 2 disulfides stabilise this stretch: Cys-94-Cys-104 and Cys-118-Cys-138.

This sequence belongs to the cystatin family. Found in saliva, tears, urine and seminal fluid.

It localises to the secreted. Its function is as follows. This protein strongly inhibits papain and ficin, partially inhibits stem bromelain and bovine cathepsin C, but does not inhibit porcine cathepsin B or clostripain. Papain is inhibited non-competitively. This Rattus norvegicus (Rat) protein is Cystatin-S (Cst4).